Reading from the N-terminus, the 304-residue chain is Homoserine O-succinyltransferase (304 aa).

Cys142 (acyl-thioester intermediate) is an active-site residue. Residues Lys163 and Ser192 each coordinate substrate. Catalysis depends on His235, which acts as the Proton acceptor. Glu237 is an active-site residue. Arg249 contributes to the substrate binding site.

This sequence belongs to the MetA family.

It is found in the cytoplasm. It carries out the reaction L-homoserine + succinyl-CoA = O-succinyl-L-homoserine + CoA. The protein operates within amino-acid biosynthesis; L-methionine biosynthesis via de novo pathway; O-succinyl-L-homoserine from L-homoserine: step 1/1. Functionally, transfers a succinyl group from succinyl-CoA to L-homoserine, forming succinyl-L-homoserine. The protein is Homoserine O-succinyltransferase of Blochmanniella pennsylvanica (strain BPEN).